Consider the following 577-residue polypeptide: MQRTCYIGELNASLVGQTVILQGWANRRRDLGGLIFIELRDRSGSIQVEVEPDSPAFHEADTVRAEYVLEVEGRFQPRPEEQRKGGLADYEVIALRVTVLSAAKTPPFELDKGESVAEDIRLKYRYLDLRRPEMQRHLMLRSRAVAAATAFLDAEGFVQVETPMLTRSTPEGARDFLVPSRLNPGEFYALPQSPQLFKQLLMIAGFDRYYQFARCFRDEDLRADRQPDFTQLDMEMSFVTQEDVLDVQERLLAHVFRTVLDYELPLPFPRLSYQEAMDRYGSDKPDLRFDRAFADVTDLFRGGEFGAFADAETVKVLAAPALTRKQLDELERVAKQNGAKGLAWARREGDGLTGGISRFLGEQAAALLERTGVEPGGTLLFSAGEWKKAVTALGAVRLALRDLFDLAAGGPRFQVAWVLDFPQLEFDEEAGSWTYMHHPFTAPRPEDIPLFGTERQGEIRAQAYDLVLNGFEVGGGSIRIHDPAVQTQMFQAIGLSEAEAREKFGFFLDALSYGTPPHGGIAWGFDRLVMVMAGASSIREVIAFPKNNRGVDLMAGAPSPVSPAQLAEVGVAVTTES.

Glu-171 contacts L-aspartate. The segment at 195–198 is aspartate; the sequence is QLFK. Position 217 (Arg-217) interacts with L-aspartate. Residues 217–219 and Gln-226 each bind ATP; that span reads RDE. His-437 provides a ligand contact to L-aspartate. Glu-472 provides a ligand contact to ATP. L-aspartate is bound at residue Arg-479. 524-527 contributes to the ATP binding site; sequence GFDR.

This sequence belongs to the class-II aminoacyl-tRNA synthetase family. Type 1 subfamily. In terms of assembly, homodimer.

The protein localises to the cytoplasm. It carries out the reaction tRNA(Asp) + L-aspartate + ATP = L-aspartyl-tRNA(Asp) + AMP + diphosphate. In terms of biological role, catalyzes the attachment of L-aspartate to tRNA(Asp) in a two-step reaction: L-aspartate is first activated by ATP to form Asp-AMP and then transferred to the acceptor end of tRNA(Asp). This Deinococcus geothermalis (strain DSM 11300 / CIP 105573 / AG-3a) protein is Aspartate--tRNA ligase.